A 162-amino-acid polypeptide reads, in one-letter code: Regulator of sigma D (162 aa).

It belongs to the Rsd/AlgQ family. As to quaternary structure, interacts with RpoD.

It is found in the cytoplasm. Its function is as follows. Binds RpoD and negatively regulates RpoD-mediated transcription activation by preventing the interaction between the primary sigma factor RpoD with the catalytic core of the RNA polymerase and with promoter DNA. May be involved in replacement of the RNA polymerase sigma subunit from RpoD to RpoS during the transition from exponential growth to the stationary phase. In Salmonella choleraesuis (strain SC-B67), this protein is Regulator of sigma D.